The chain runs to 378 residues: Putative glutamate--cysteine ligase 2 (378 aa).

The protein belongs to the glutamate--cysteine ligase type 2 family. YbdK subfamily.

The catalysed reaction is L-cysteine + L-glutamate + ATP = gamma-L-glutamyl-L-cysteine + ADP + phosphate + H(+). ATP-dependent carboxylate-amine ligase which exhibits weak glutamate--cysteine ligase activity. The polypeptide is Putative glutamate--cysteine ligase 2 (Salinispora arenicola (strain CNS-205)).